Consider the following 207-residue polypeptide: ATP synthase subunit 5, mitochondrial (207 aa).

This sequence belongs to the ATPase delta chain family. F-type ATPases have 2 components, CF(1) - the catalytic core - and CF(0) - the membrane proton channel. CF(1) has five subunits: alpha(3), beta(3), gamma(1), delta(1), epsilon(1). CF(0) has three main subunits: a, b and c.

It localises to the mitochondrion. The protein resides in the mitochondrion inner membrane. Its function is as follows. Mitochondrial membrane ATP synthase (F(1)F(0) ATP synthase or Complex V) produces ATP from ADP in the presence of a proton gradient across the membrane which is generated by electron transport complexes of the respiratory chain. F-type ATPases consist of two structural domains, F(1) - containing the extramembraneous catalytic core and F(0) - containing the membrane proton channel, linked together by a central stalk and a peripheral stalk. During catalysis, ATP synthesis in the catalytic domain of F(1) is coupled via a rotary mechanism of the central stalk subunits to proton translocation. Part of the complex F(0) domain and the peripheric stalk, which acts as a stator to hold the catalytic alpha(3)beta(3) subcomplex and subunit a/ATP6 static relative to the rotary elements. The polypeptide is ATP synthase subunit 5, mitochondrial (ATP5) (Candida glabrata (strain ATCC 2001 / BCRC 20586 / JCM 3761 / NBRC 0622 / NRRL Y-65 / CBS 138) (Yeast)).